The following is a 209-amino-acid chain: Probable calcium-binding protein CML36 (209 aa).

The disordered stretch occupies residues 22–59 (SKSPTAFSFGSASSSSGQDCKNSGGDGGGGSVTPTSIL). The span at 27-38 (AFSFGSASSSSG) shows a compositional bias: low complexity. 4 consecutive EF-hand domains span residues 66-101 (YSYV…LGPD), 103-138 (LTEE…LDPA), 139-174 (RDST…IGDE), and 176-209 (CTLD…DLQR). Aspartate 79, aspartate 81, aspartate 83, and aspartate 90 together coordinate Ca(2+). Ca(2+) contacts are provided by aspartate 152, aspartate 154, aspartate 156, glutamate 163, aspartate 189, aspartate 191, aspartate 193, and glutamate 200.

Its function is as follows. Potential calcium sensor. This Arabidopsis thaliana (Mouse-ear cress) protein is Probable calcium-binding protein CML36 (CML36).